A 226-amino-acid chain; its full sequence is ATP synthase F(0) complex subunit a (226 aa).

The next 6 membrane-spanning stretches (helical) occupy residues 6 to 26, 68 to 88, 97 to 117, 138 to 158, 164 to 184, and 200 to 222; these read FASF…IVLF, WTLM…LGLL, QLSM…ITGF, IPML…ALAV, ITAG…LMSI, and TILE…SLYL.

It belongs to the ATPase A chain family. In terms of assembly, component of the ATP synthase complex composed at least of ATP5F1A/subunit alpha, ATP5F1B/subunit beta, ATP5MC1/subunit c (homooctomer), MT-ATP6/subunit a, MT-ATP8/subunit 8, ATP5ME/subunit e, ATP5MF/subunit f, ATP5MG/subunit g, ATP5MK/subunit k, ATP5MJ/subunit j, ATP5F1C/subunit gamma, ATP5F1D/subunit delta, ATP5F1E/subunit epsilon, ATP5PF/subunit F6, ATP5PB/subunit b, ATP5PD/subunit d, ATP5PO/subunit OSCP. ATP synthase complex consists of a soluble F(1) head domain (subunits alpha(3) and beta(3)) - the catalytic core - and a membrane F(0) domain - the membrane proton channel (subunits c, a, 8, e, f, g, k and j). These two domains are linked by a central stalk (subunits gamma, delta, and epsilon) rotating inside the F1 region and a stationary peripheral stalk (subunits F6, b, d, and OSCP). Interacts with DNAJC30; interaction is direct.

It localises to the mitochondrion inner membrane. It catalyses the reaction H(+)(in) = H(+)(out). Its function is as follows. Subunit a, of the mitochondrial membrane ATP synthase complex (F(1)F(0) ATP synthase or Complex V) that produces ATP from ADP in the presence of a proton gradient across the membrane which is generated by electron transport complexes of the respiratory chain. ATP synthase complex consist of a soluble F(1) head domain - the catalytic core - and a membrane F(1) domain - the membrane proton channel. These two domains are linked by a central stalk rotating inside the F(1) region and a stationary peripheral stalk. During catalysis, ATP synthesis in the catalytic domain of F(1) is coupled via a rotary mechanism of the central stalk subunits to proton translocation. With the subunit c (ATP5MC1), forms the proton-conducting channel in the F(0) domain, that contains two crucial half-channels (inlet and outlet) that facilitate proton movement from the mitochondrial intermembrane space (IMS) into the matrix. Protons are taken up via the inlet half-channel and released through the outlet half-channel, following a Grotthuss mechanism. This is ATP synthase F(0) complex subunit a from Bos mutus grunniens (Wild yak).